The sequence spans 365 residues: 4-hydroxy-3-methylbut-2-en-1-yl diphosphate synthase (flavodoxin) (365 aa).

4 residues coordinate [4Fe-4S] cluster: Cys-265, Cys-268, Cys-300, and Glu-307.

Belongs to the IspG family. The cofactor is [4Fe-4S] cluster.

The enzyme catalyses (2E)-4-hydroxy-3-methylbut-2-enyl diphosphate + oxidized [flavodoxin] + H2O + 2 H(+) = 2-C-methyl-D-erythritol 2,4-cyclic diphosphate + reduced [flavodoxin]. Its pathway is isoprenoid biosynthesis; isopentenyl diphosphate biosynthesis via DXP pathway; isopentenyl diphosphate from 1-deoxy-D-xylulose 5-phosphate: step 5/6. Its function is as follows. Converts 2C-methyl-D-erythritol 2,4-cyclodiphosphate (ME-2,4cPP) into 1-hydroxy-2-methyl-2-(E)-butenyl 4-diphosphate. This is 4-hydroxy-3-methylbut-2-en-1-yl diphosphate synthase (flavodoxin) from Bacillus mycoides (strain KBAB4) (Bacillus weihenstephanensis).